The sequence spans 64 residues: Large ribosomal subunit protein bL35 (64 aa).

The disordered stretch occupies residues 27 to 47 (MNGSHNLEKKNRKRSRRLHQA). Residues 36-45 (KNRKRSRRLH) are compositionally biased toward basic residues.

Belongs to the bacterial ribosomal protein bL35 family.

This chain is Large ribosomal subunit protein bL35, found in Chlorobium phaeobacteroides (strain DSM 266 / SMG 266 / 2430).